The sequence spans 297 residues: MKHIITPYEHTNDTARNNSDCPDVVLPEEIFFTISIIGVLENLIVLLAVVKNKNLQCPMYFFICSLAISDMLGSLYKILENILIMFRNRGYLQPRGNFESTADDIIDCMFILSLLGSIFSLSVIAADRYITIFHALQYHSIVTMRRTIITLTVIWIFCTGSGIAMVIFSHHVPTVLTFTSLFPLMLVFILCLYIHMFLLARSHARKISTLPRANMKGAITLTILLGVFIFCWAPFILHVLLMTFCPNNPYCVCYMSLFQINGMLIMCNAVIDPFIYAFRSPELRDAFKKMFSCHRYQ.

The Extracellular portion of the chain corresponds to 1–23; sequence MKHIITPYEHTNDTARNNSDCPD. 2 N-linked (GlcNAc...) asparagine glycosylation sites follow: Asn12 and Asn17. 2 cysteine pairs are disulfide-bonded: Cys21-Cys253 and Cys245-Cys251. Residues 24–49 form a helical membrane-spanning segment; that stretch reads VVLPEEIFFTISIIGVLENLIVLLAV. Over 50–58 the chain is Cytoplasmic; the sequence is VKNKNLQCP. A helical transmembrane segment spans residues 59-79; the sequence is MYFFICSLAISDMLGSLYKIL. The Extracellular segment spans residues 80-104; that stretch reads ENILIMFRNRGYLQPRGNFESTADD. Residues 105-126 traverse the membrane as a helical segment; it reads IIDCMFILSLLGSIFSLSVIAA. Residues 127 to 147 are Cytoplasmic-facing; sequence DRYITIFHALQYHSIVTMRRT. Residues 148–168 form a helical membrane-spanning segment; the sequence is IITLTVIWIFCTGSGIAMVIF. The Extracellular segment spans residues 169–180; sequence SHHVPTVLTFTS. Residues 181-199 traverse the membrane as a helical segment; it reads LFPLMLVFILCLYIHMFLL. The Cytoplasmic segment spans residues 200 to 217; sequence ARSHARKISTLPRANMKG. A helical membrane pass occupies residues 218–244; sequence AITLTILLGVFIFCWAPFILHVLLMTF. At 245–256 the chain is on the extracellular side; that stretch reads CPNNPYCVCYMS. The helical transmembrane segment at 257–278 threads the bilayer; the sequence is LFQINGMLIMCNAVIDPFIYAF. At 279-297 the chain is on the cytoplasmic side; that stretch reads RSPELRDAFKKMFSCHRYQ. Residue Cys293 is the site of S-palmitoyl cysteine attachment.

This sequence belongs to the G-protein coupled receptor 1 family. As to quaternary structure, homodimer. Interacts with corticotropin (ACTH). Interacts with MRAP; this interaction targets MC2R to the plasma membrane. Interacts with MRAP2; competing with MRAP for binding to MC2R and impairing the binding of corticotropin (ACTH). Post-translationally, ubiquitinated by MGRN1 that may be involved in post-endocytic trafficking and/or degradation of internalized receptor.

The protein localises to the cell membrane. Functionally, hormone receptor primarily expressed in adrenal cortex that plays a key role in regulating adrenocortical function. Upon corticotropin (ACTH) binding, facilitates the release of adrenal glucocorticoids, including cortisol and corticosterone. In addition, MC2R is required for fetal and neonatal adrenal gland development. Mechanistically, activates adenylate cyclase (cAMP), the MAPK cascade as well as the cAMP-dependent protein kinase A pathway leading to steroidogenic factor 1/NR5A1-mediated transcriptional activation. The sequence is that of Adrenocorticotropic hormone receptor (MC2R) from Mesocricetus auratus (Golden hamster).